The following is a 359-amino-acid chain: Protein RecA (359 aa).

77–84 (GPESSGKT) is an ATP binding site.

It belongs to the RecA family.

The protein resides in the cytoplasm. Functionally, can catalyze the hydrolysis of ATP in the presence of single-stranded DNA, the ATP-dependent uptake of single-stranded DNA by duplex DNA, and the ATP-dependent hybridization of homologous single-stranded DNAs. It interacts with LexA causing its activation and leading to its autocatalytic cleavage. This chain is Protein RecA, found in Azospirillum lipoferum (strain 4B).